Consider the following 80-residue polypeptide: MMKPLRQQNRQIISYIPRVEPAPPEHAIKMDTFRDVWILRGKYVAFVLTGESFQRSPAFSVPESAQRWANQVRQENEIAD.

Belongs to the CedA family.

In terms of biological role, activates the cell division inhibited by chromosomal DNA over-replication. This Salmonella choleraesuis (strain SC-B67) protein is Cell division activator CedA.